Here is a 1070-residue protein sequence, read N- to C-terminus: Phosphatidylinositol 4,5-bisphosphate 3-kinase catalytic subunit beta isoform (1070 aa).

One can recognise a PI3K-ABD domain in the interval 26-115 (SDGSISVDFL…LPVLKLVTRS (90 aa)). Positions 194-285 (GGKLVVAVHF…RTLPHFILVE (92 aa)) constitute a PI3K-RBD domain. Ser-324 bears the Phosphoserine mark. In terms of domain architecture, C2 PI3K-type spans 327 to 496 (WGNNNPFQIV…NATALHIKFP (170 aa)). Positions 410–418 (KVKTKKSTK) match the Nuclear localization signal (NLS) motif. The PIK helical domain occupies 524-701 (ANVSSRGGKK…GVILEAYCRG (178 aa)). One can recognise a PI3K/PI4K catalytic domain in the interval 772-1053 (YVEKCRYMDS…KFDEALRESW (282 aa)). The interval 778-784 (YMDSKMK) is G-loop. The interval 916–924 (GIGDRHSDN) is catalytic loop. Residues 935-961 (HIDFGHILGNFKSKFGIKRERVPFILT) are activation loop. Ser-1070 carries the post-translational modification Phosphoserine; by autocatalysis.

It belongs to the PI3/PI4-kinase family. As to quaternary structure, heterodimer of a catalytic subunit PIK3CB and a p85 regulatory subunit (PIK3R1, PIK3R2 or PIK3R3). Interaction with PIK3R2 is required for nuclear localization and nuclear export. Part of a complex with PIK3R1 and PTEN. Binding to PTEN may antagonize the lipid kinase activity under normal growth conditions. Part of a complex involved in autophagosome formation composed of PIK3C3 and PIK3R4. Interacts with BECN1, ATG14 and RAB5A. Autophosphorylation at Ser-1070 negatively regulates the phosphatidylinositol-4,5-bisphosphate 3-kinase activity.

Its subcellular location is the cytoplasm. The protein localises to the nucleus. It catalyses the reaction a 1,2-diacyl-sn-glycero-3-phospho-(1D-myo-inositol-4,5-bisphosphate) + ATP = a 1,2-diacyl-sn-glycero-3-phospho-(1D-myo-inositol-3,4,5-trisphosphate) + ADP + H(+). The catalysed reaction is 1-octadecanoyl-2-(5Z,8Z,11Z,14Z)-eicosatetraenoyl-sn-glycero-3-phospho-1D-myo-inositol 4,5-bisphosphate + ATP = 1-octadecanoyl-2-(5Z,8Z,11Z,14Z-eicosatetraenoyl)-sn-glycero-3-phospho-(1D-myo-inositol 3,4,5-triphosphate) + ADP + H(+). It carries out the reaction L-seryl-[protein] + ATP = O-phospho-L-seryl-[protein] + ADP + H(+). Its pathway is phospholipid metabolism; phosphatidylinositol phosphate biosynthesis. Its function is as follows. Phosphoinositide-3-kinase (PI3K) phosphorylates phosphatidylinositol (PI) derivatives at position 3 of the inositol ring to produce 3-phosphoinositides. Uses ATP and PtdIns(4,5)P2 (phosphatidylinositol 4,5-bisphosphate) to generate phosphatidylinositol 3,4,5-trisphosphate (PIP3). PIP3 plays a key role by recruiting PH domain-containing proteins to the membrane, including AKT1 and PDPK1, activating signaling cascades involved in cell growth, survival, proliferation, motility and morphology. Involved in the activation of AKT1 upon stimulation by G-protein coupled receptors (GPCRs) ligands such as CXCL12, sphingosine 1-phosphate, and lysophosphatidic acid. May also act downstream receptor tyrosine kinases. Required in different signaling pathways for stable platelet adhesion and aggregation. Plays a role in platelet activation signaling triggered by GPCRs, alpha-IIb/beta-3 integrins (ITGA2B/ ITGB3) and ITAM (immunoreceptor tyrosine-based activation motif)-bearing receptors such as GP6. Regulates the strength of adhesion of ITGA2B/ ITGB3 activated receptors necessary for the cellular transmission of contractile forces. Required for platelet aggregation induced by F2 (thrombin) and thromboxane A2 (TXA2). Has a role in cell survival. May have a role in cell migration. Involved in the early stage of autophagosome formation. Modulates the intracellular level of PtdIns3P (phosphatidylinositol 3-phosphate) and activates PIK3C3 kinase activity. May act as a scaffold, independently of its lipid kinase activity to positively regulate autophagy. May have a role in insulin signaling as scaffolding protein in which the lipid kinase activity is not required. May have a kinase-independent function in regulating cell proliferation and in clathrin-mediated endocytosis. Mediator of oncogenic signal in cell lines lacking PTEN. The lipid kinase activity is necessary for its role in oncogenic transformation. Required for the growth of ERBB2 and RAS driven tumors. Also has a protein kinase activity showing autophosphorylation. This is Phosphatidylinositol 4,5-bisphosphate 3-kinase catalytic subunit beta isoform (Pik3cb) from Rattus norvegicus (Rat).